The chain runs to 267 residues: MRILVEIAYQGNNFLGFQIQQNGRTVQQQFEKLLQRMHKRHVRIHPSSRTDRGVHAIQQYFHFDTELNIPMSQWQYAMNRTLPVDIYVNNVVTVDDDFHCRYDCVGKRYRYKVYQAQHRDPFQRGLKTFIPEPLDLDKMNRAAQQFIGTHDFTGFCSQKTEVESKVRTLYQSEIVKTDDGFDYIVTGSGFLYNMVRVLVAFLIEVGKGRHEVSDVPKLLESKNRKNVPFTAPAEGLYLEKIYLDENELLKDFGNDIKIHRKKSLQND.

The active-site Nucleophile is the Asp51. Substrate is bound at residue Tyr109.

The protein belongs to the tRNA pseudouridine synthase TruA family. As to quaternary structure, homodimer.

It catalyses the reaction uridine(38/39/40) in tRNA = pseudouridine(38/39/40) in tRNA. In terms of biological role, formation of pseudouridine at positions 38, 39 and 40 in the anticodon stem and loop of transfer RNAs. In Staphylococcus aureus (strain bovine RF122 / ET3-1), this protein is tRNA pseudouridine synthase A.